Consider the following 255-residue polypeptide: Acetylglutamate kinase (255 aa).

Residues 40 to 41 (GG), Arg62, and Asn153 contribute to the substrate site.

It belongs to the acetylglutamate kinase family. ArgB subfamily.

It localises to the cytoplasm. The enzyme catalyses N-acetyl-L-glutamate + ATP = N-acetyl-L-glutamyl 5-phosphate + ADP. It functions in the pathway amino-acid biosynthesis; L-arginine biosynthesis; N(2)-acetyl-L-ornithine from L-glutamate: step 2/4. Functionally, catalyzes the ATP-dependent phosphorylation of N-acetyl-L-glutamate. The chain is Acetylglutamate kinase from Bacillus anthracis (strain CDC 684 / NRRL 3495).